Reading from the N-terminus, the 218-residue chain is Glutathione S-transferase Mu 1 (218 aa).

The 87-residue stretch at 2 to 88 (PMTLGYWDVR…YLARKHGLCG (87 aa)) folds into the GST N-terminal domain. Glutathione contacts are provided by residues 7–8 (YW), 46–50 (WLSEK), 59–60 (NL), and 72–73 (QS). One can recognise a GST C-terminal domain in the interval 90-208 (TEEERIRVDI…KSSRFIRVPV (119 aa)). Tyrosine 116 provides a ligand contact to substrate.

Belongs to the GST superfamily. Mu family. In terms of assembly, homodimer. Well expressed in rabbit liver, brain and kidney.

The protein resides in the cytoplasm. The enzyme catalyses RX + glutathione = an S-substituted glutathione + a halide anion + H(+). In terms of biological role, conjugation of reduced glutathione to a wide number of exogenous and endogenous hydrophobic electrophiles. This is Glutathione S-transferase Mu 1 from Oryctolagus cuniculus (Rabbit).